Reading from the N-terminus, the 28-residue chain is Caerulein precursor fragment B1 (28 aa).

It belongs to the gastrin/cholecystokinin family. In terms of tissue distribution, expressed by the skin glands.

The protein resides in the secreted. Its function is as follows. Peptide CPF-B1: Has antimicrobial activity against Gram-negative bacteria E.coli ATCC 25922 (MIC=5 uM) and multidrug-resistant A.baumannii (MIC=4-8 uM), against Gram-positive bacteria S.aureus ATCC 25923 (MIC=5 uM) and methicillin-resistant S.aureus and against fungus C.albicans ATCC 90028 (MIC=25 uM). Has some hemolytic activity against human erythrocytes at high concentrations. In Xenopus borealis (Kenyan clawed frog), this protein is Caerulein precursor fragment B1.